The primary structure comprises 299 residues: ATP synthase gamma chain (299 aa).

Belongs to the ATPase gamma chain family. F-type ATPases have 2 components, CF(1) - the catalytic core - and CF(0) - the membrane proton channel. CF(1) has five subunits: alpha(3), beta(3), gamma(1), delta(1), epsilon(1). CF(0) has three main subunits: a, b and c.

It localises to the cell membrane. In terms of biological role, produces ATP from ADP in the presence of a proton gradient across the membrane. The gamma chain is believed to be important in regulating ATPase activity and the flow of protons through the CF(0) complex. This Levilactobacillus brevis (strain ATCC 367 / BCRC 12310 / CIP 105137 / JCM 1170 / LMG 11437 / NCIMB 947 / NCTC 947) (Lactobacillus brevis) protein is ATP synthase gamma chain.